The following is a 348-amino-acid chain: Enkurin domain-containing protein 1 (348 aa).

Disordered regions lie at residues Met-1–Gly-65, Gly-84–Lys-195, and Ala-262–Pro-282. Ser-93 bears the Phosphoserine mark. Positions Lys-95–Gly-127 are enriched in basic and acidic residues. Ser-138 is subject to Phosphoserine. Basic and acidic residues predominate over residues Pro-139–Val-148. Residues Glu-253 to Lys-345 form the Enkurin domain.

In terms of assembly, interacts with alpha-tubulin. Interacts (via central region) with CCP110 (via N-terminal region); competes with CEP97 for binding to CCP110.

It localises to the cytoplasm. The protein resides in the cytoskeleton. It is found in the microtubule organizing center. Its subcellular location is the centrosome. The protein localises to the centriole. It localises to the cilium basal body. The protein resides in the cell projection. It is found in the cilium. Its subcellular location is the spindle. The protein localises to the spindle pole. It localises to the cilium axoneme. In terms of biological role, microtubule-binding protein which regulates microtubule organization and stability. Promotes the stability of astral microtubules and facilitates the proper orientation of the mitotic spindle. This allows the oriented division of basal keratinocytes and contributes to epidermal stratification. Required for the assembly of both primary and motile cilia. Destabilizes the interaction between CCP110 and CEP97 by competing with CEP97 for binding to CCP110 which promotes the removal of CCP110 and CEP97 from the mother centriole and allows the initiation of ciliogenesis. This is Enkurin domain-containing protein 1 (ENKD1) from Bos taurus (Bovine).